Reading from the N-terminus, the 115-residue chain is Large ribosomal subunit protein bL19 (115 aa).

Belongs to the bacterial ribosomal protein bL19 family.

This protein is located at the 30S-50S ribosomal subunit interface and may play a role in the structure and function of the aminoacyl-tRNA binding site. This is Large ribosomal subunit protein bL19 from Francisella tularensis subsp. mediasiatica (strain FSC147).